A 295-amino-acid polypeptide reads, in one-letter code: uncharacterized protein (295 aa).

Disordered regions lie at residues 33–52 and 180–295; these read VDAPPASQIPGLSNLGDSHS and LSKA…AELK. Ser50 carries the post-translational modification Phosphoserine. Composition is skewed to polar residues over residues 205-217 and 241-251; these read QKNSSPTNFSKLI and TSRASVLSQSP. The segment covering 267-276 has biased composition (acidic residues); sequence EASEGPEDTP. The segment covering 277-289 has biased composition (low complexity); that stretch reads ESSQSPEESVSAS.

This is an uncharacterized protein from Homo sapiens (Human).